The following is a 332-amino-acid chain: Beta-ketoacyl-[acyl-carrier-protein] synthase III (332 aa).

Active-site residues include Cys-116 and His-257. The tract at residues 258–262 (QANQR) is ACP-binding. Asn-287 is an active-site residue.

This sequence belongs to the thiolase-like superfamily. FabH family. In terms of assembly, homodimer.

The protein resides in the cytoplasm. It carries out the reaction malonyl-[ACP] + acetyl-CoA + H(+) = 3-oxobutanoyl-[ACP] + CO2 + CoA. It functions in the pathway lipid metabolism; fatty acid biosynthesis. Functionally, catalyzes the condensation reaction of fatty acid synthesis by the addition to an acyl acceptor of two carbons from malonyl-ACP. Catalyzes the first condensation reaction which initiates fatty acid synthesis and may therefore play a role in governing the total rate of fatty acid production. Possesses both acetoacetyl-ACP synthase and acetyl transacylase activities. Its substrate specificity determines the biosynthesis of branched-chain and/or straight-chain of fatty acids. The chain is Beta-ketoacyl-[acyl-carrier-protein] synthase III from Acaryochloris marina (strain MBIC 11017).